Here is a 402-residue protein sequence, read N- to C-terminus: Nuclear hormone receptor family member nhr-96 (402 aa).

A DNA-binding region (nuclear receptor) is located at residues F4–Q79. 2 consecutive NR C4-type zinc fingers follow at residues C7–C27 and C44–C67. One can recognise an NR LBD domain in the interval N154–T402.

This sequence belongs to the nuclear hormone receptor family.

It is found in the nucleus. Orphan nuclear receptor. This chain is Nuclear hormone receptor family member nhr-96 (nhr-96), found in Caenorhabditis elegans.